The following is a 306-amino-acid chain: Polyisoprenyl-teichoic acid--peptidoglycan teichoic acid transferase TagU (306 aa).

Over methionine 1–lysine 11 the chain is Cytoplasmic. A helical; Signal-anchor for type II membrane protein transmembrane segment spans residues isoleucine 12–tyrosine 32. Residues tyrosine 33–lysine 306 lie on the Extracellular side of the membrane.

This sequence belongs to the LytR/CpsA/Psr (LCP) family.

It localises to the cell membrane. It participates in cell wall biogenesis. Functionally, may catalyze the final step in cell wall teichoic acid biosynthesis, the transfer of the anionic cell wall polymers (APs) from their lipid-linked precursor to the cell wall peptidoglycan (PG). The protein is Polyisoprenyl-teichoic acid--peptidoglycan teichoic acid transferase TagU of Bacillus licheniformis (strain ATCC 14580 / DSM 13 / JCM 2505 / CCUG 7422 / NBRC 12200 / NCIMB 9375 / NCTC 10341 / NRRL NRS-1264 / Gibson 46).